A 358-amino-acid polypeptide reads, in one-letter code: Purine permease 2 (358 aa).

Helical transmembrane passes span 6–26, 37–57, 74–94, 110–130, 134–154, 170–190, 209–229, 262–282, 288–308, and 312–332; these read VLVIINCIFLAIGNCGGPLMM, IWFPSFLQTVGCPLIFFPLLL, FFLMKPPLFIAAIVVGLLVGF, TASLIISAQLGFTALFAFFMV, FTPFTINAIVLLTGGAVVLAL, VVGFIMTLGAALLYGFILPLV, FQMVLCFAATCVCLVGMLAAG, VIVFTAIIWQAFFVGAIGLIF, VSGIMVSALLPVTVILAVICF, and FQAGKGVALALSLWGSVSYFY. The region spanning 46 to 154 is the EamA domain; that stretch reads VGCPLIFFPL…LTGGAVVLAL (109 aa).

Belongs to the purine permeases (TC 2.A.7.14) family. As to expression, expressed in the vascular system of leaves. Restricted to the phloem. Expressed in flowers and roots and not detected in stems.

It localises to the membrane. Competitive inhibition of adenine transport by isopentenyladenine, kinetin, benzylaminopurine, trans- and cis-zeatin and trans-zeatin riboside. Functionally, mediates adenine transport. May be involved in the uptake of cytokinin analogs. The chain is Purine permease 2 (PUP2) from Arabidopsis thaliana (Mouse-ear cress).